Here is a 147-residue protein sequence, read N- to C-terminus: Hemoglobin subunit delta (147 aa).

The Globin domain maps to 3–147; that stretch reads NLTAAEKTQV…VANALAHKYH (145 aa). Heme b contacts are provided by His-64 and His-93.

Belongs to the globin family. Heterotetramer of two delta chains and two alpha chains. Red blood cells.

This is Hemoglobin subunit delta (HBD) from Loxodonta africana (African elephant).